The primary structure comprises 245 residues: Probable transcriptional regulatory protein NSE_0641 (245 aa).

The interval 1–22 (MAGHSQYANIKHRKNAQDAKRA) is disordered.

This sequence belongs to the TACO1 family.

It is found in the cytoplasm. This Neorickettsia sennetsu (strain ATCC VR-367 / Miyayama) (Ehrlichia sennetsu) protein is Probable transcriptional regulatory protein NSE_0641.